We begin with the raw amino-acid sequence, 341 residues long: Trans-3-hydroxy-L-proline dehydratase (341 aa).

Residue Ser90 is the Proton acceptor of the active site. Residues 91–92 (GS), Asp252, and 257–258 (GT) each bind substrate.

The protein belongs to the proline racemase family.

The enzyme catalyses trans-3-hydroxy-L-proline = 1-pyrroline-2-carboxylate + H2O. Catalyzes the dehydration of trans-3-hydroxy-L-proline (t3LHyp) to Delta(1)-pyrroline-2-carboxylate (Pyr2C). May be involved in a degradation pathway of t3LHyp, which would allow L.aggregata to grow on t3LHyp as a sole carbon source. Displays neither proline racemase activity nor 4-hydroxyproline 2-epimerase activity. The protein is Trans-3-hydroxy-L-proline dehydratase of Roseibium aggregatum (strain ATCC 25650 / DSM 13394 / JCM 20685 / NBRC 16684 / NCIMB 2208 / IAM 12614 / B1) (Stappia aggregata).